We begin with the raw amino-acid sequence, 304 residues long: Acetyl-coenzyme A carboxylase carboxyl transferase subunit beta (304 aa).

Residues 23 to 292 (VWTKCDSCGQ…PNPDAPREGE (270 aa)) enclose the CoA carboxyltransferase N-terminal domain. Positions 27, 30, 46, and 49 each coordinate Zn(2+). Residues 27–49 (CDSCGQVLYRAELERNLEVCPKC) form a C4-type zinc finger. The interval 281–304 (PAPNPDAPREGEVVPPVPDQEPEA) is disordered. The span at 295 to 304 (PPVPDQEPEA) shows a compositional bias: pro residues.

The protein belongs to the AccD/PCCB family. Acetyl-CoA carboxylase is a heterohexamer composed of biotin carboxyl carrier protein (AccB), biotin carboxylase (AccC) and two subunits each of ACCase subunit alpha (AccA) and ACCase subunit beta (AccD). Zn(2+) is required as a cofactor.

Its subcellular location is the cytoplasm. It carries out the reaction N(6)-carboxybiotinyl-L-lysyl-[protein] + acetyl-CoA = N(6)-biotinyl-L-lysyl-[protein] + malonyl-CoA. Its pathway is lipid metabolism; malonyl-CoA biosynthesis; malonyl-CoA from acetyl-CoA: step 1/1. Component of the acetyl coenzyme A carboxylase (ACC) complex. Biotin carboxylase (BC) catalyzes the carboxylation of biotin on its carrier protein (BCCP) and then the CO(2) group is transferred by the transcarboxylase to acetyl-CoA to form malonyl-CoA. The chain is Acetyl-coenzyme A carboxylase carboxyl transferase subunit beta from Citrobacter koseri (strain ATCC BAA-895 / CDC 4225-83 / SGSC4696).